The chain runs to 128 residues: Ribonuclease pancreatic (128 aa).

A disordered region spans residues 1–25; the sequence is KESSAKKFQRQHIDSSGSPSTNPNY. Substrate contacts are provided by Lys7 and Arg10. The active-site Proton acceptor is His12. Residues 14-25 are compositionally biased toward polar residues; that stretch reads DSSGSPSTNPNY. Intrachain disulfides connect Cys26/Cys84, Cys40/Cys95, Cys58/Cys110, and Cys65/Cys72. A glycan (N-linked (GlcNAc...) asparagine) is linked at Asn34. Substrate contacts are provided by residues 41–45, Lys66, and Arg85; that span reads KPVNT. His119 acts as the Proton donor in catalysis.

This sequence belongs to the pancreatic ribonuclease family. In terms of assembly, monomer. Interacts with and forms tight 1:1 complexes with RNH1. Dimerization of two such complexes may occur. Interaction with RNH1 inhibits this protein. Pancreas.

The protein resides in the secreted. It carries out the reaction an [RNA] containing cytidine + H2O = an [RNA]-3'-cytidine-3'-phosphate + a 5'-hydroxy-ribonucleotide-3'-[RNA].. The enzyme catalyses an [RNA] containing uridine + H2O = an [RNA]-3'-uridine-3'-phosphate + a 5'-hydroxy-ribonucleotide-3'-[RNA].. In terms of biological role, endonuclease that catalyzes the cleavage of RNA on the 3' side of pyrimidine nucleotides. Acts on single-stranded and double-stranded RNA. In Proechimys guairae (Guaira spiny rat), this protein is Ribonuclease pancreatic (RNASE1).